A 78-amino-acid polypeptide reads, in one-letter code: Putative defensin-like protein 288 (78 aa).

Positions 1–21 (MSNLRLTIAVFLAALFQTLWW) are cleaved as a signal peptide.

The protein belongs to the DEFL family.

The protein resides in the secreted. The protein is Putative defensin-like protein 288 of Arabidopsis thaliana (Mouse-ear cress).